The primary structure comprises 238 residues: 7-cyano-7-deazaguanine synthase (238 aa).

10–20 (LSGGLDSSTVL) provides a ligand contact to ATP. Zn(2+) contacts are provided by cysteine 190, cysteine 198, cysteine 201, and cysteine 204.

It belongs to the QueC family. Zn(2+) serves as cofactor.

It catalyses the reaction 7-carboxy-7-deazaguanine + NH4(+) + ATP = 7-cyano-7-deazaguanine + ADP + phosphate + H2O + H(+). The protein operates within purine metabolism; 7-cyano-7-deazaguanine biosynthesis. In terms of biological role, catalyzes the ATP-dependent conversion of 7-carboxy-7-deazaguanine (CDG) to 7-cyano-7-deazaguanine (preQ(0)). This chain is 7-cyano-7-deazaguanine synthase, found in Thermoplasma acidophilum (strain ATCC 25905 / DSM 1728 / JCM 9062 / NBRC 15155 / AMRC-C165).